The following is a 189-amino-acid chain: Probable nicotinate-nucleotide adenylyltransferase (189 aa).

It belongs to the NadD family.

The enzyme catalyses nicotinate beta-D-ribonucleotide + ATP + H(+) = deamido-NAD(+) + diphosphate. It functions in the pathway cofactor biosynthesis; NAD(+) biosynthesis; deamido-NAD(+) from nicotinate D-ribonucleotide: step 1/1. Functionally, catalyzes the reversible adenylation of nicotinate mononucleotide (NaMN) to nicotinic acid adenine dinucleotide (NaAD). In Cereibacter sphaeroides (strain ATCC 17023 / DSM 158 / JCM 6121 / CCUG 31486 / LMG 2827 / NBRC 12203 / NCIMB 8253 / ATH 2.4.1.) (Rhodobacter sphaeroides), this protein is Probable nicotinate-nucleotide adenylyltransferase.